A 748-amino-acid chain; its full sequence is Peptidyl serine alpha-galactosyltransferase (748 aa).

Residues 1–26 (MVAVFHGPLVLGALLLLLALQHGASA) form the signal peptide. The Extracellular segment spans residues 27 to 710 (EEPGFANRTG…GPSLHSLLGR (684 aa)). Residues Asn-33, Asn-184, and Asn-297 are each glycosylated (N-linked (GlcNAc...) asparagine). In terms of domain architecture, ShKT spans 415–449 (CQDFHPKCEEWKESGECTKNENYMTENCRKTCDKC). Disulfide bonds link Cys-415-Cys-449, Cys-422-Cys-442, and Cys-431-Cys-446. 2 disordered regions span residues 474–576 (ELQP…ADPK) and 611–670 (EVPK…KKNI). Pro residues predominate over residues 531–565 (SPPPSPPPASPPPVDSPPPMSPPPESPSPDKPPPK). A compositionally biased stretch (basic and acidic residues) spans 611-637 (EVPKRTKATDEEEEAPKAKHAESHLTL). Residues 711–731 (LNTWQALVLWLVVVVAFLALV) traverse the membrane as a helical segment. At 732 to 748 (PRIAKLRRRQRSGMRTE) the chain is on the cytoplasmic side.

Mn(2+) is required as a cofactor.

It is found in the membrane. Functionally, glycosyltransferase involved in the O-galactosylation of several proteins including extensins. Catalyzes the transfer of alpha-galactosyl to Ser residues. Hydroxylation of proline residues adjacent to the serine acceptor is required for activity. Utilizes selectively UDP-galactose as a donor nucleotide sugar. The chain is Peptidyl serine alpha-galactosyltransferase from Chlamydomonas reinhardtii (Chlamydomonas smithii).